An 88-amino-acid chain; its full sequence is Small ribosomal subunit protein bS16 (88 aa).

The protein belongs to the bacterial ribosomal protein bS16 family.

This Geobacter metallireducens (strain ATCC 53774 / DSM 7210 / GS-15) protein is Small ribosomal subunit protein bS16.